A 142-amino-acid polypeptide reads, in one-letter code: Large ribosomal subunit protein uL13 (142 aa).

Belongs to the universal ribosomal protein uL13 family. Part of the 50S ribosomal subunit.

Its function is as follows. This protein is one of the early assembly proteins of the 50S ribosomal subunit, although it is not seen to bind rRNA by itself. It is important during the early stages of 50S assembly. This chain is Large ribosomal subunit protein uL13, found in Pseudoalteromonas translucida (strain TAC 125).